Consider the following 169-residue polypeptide: uncharacterized protein (169 aa).

Its subcellular location is the mitochondrion. This is an uncharacterized protein from Paramecium tetraurelia.